Consider the following 616-residue polypeptide: Protein phosphatase EYA4 (616 aa).

Position 1 is an N-acetylmethionine (methionine 1). Disordered stretches follow at residues 1-66 (MEDT…VTTN), 186-211 (SQTQSPLQSGCLSYSPGFSTPQPGQT), and 277-345 (ADGT…DSDL). Residues lysine 14 and lysine 52 each participate in a glycyl lysine isopeptide (Lys-Gly) (interchain with G-Cter in SUMO2) cross-link. Residues 56–66 (SGLSSTSVTTN) are compositionally biased toward low complexity. Over residues 277-311 (ADGTSSSTSTYQLQESLQGLTSQPGEFDTVQSPST) the composition is skewed to polar residues. A Phosphoserine modification is found at serine 338. Aspartate 352 functions as the Nucleophile in the catalytic mechanism. Mg(2+) is bound by residues aspartate 352, aspartate 354, and aspartate 580. The active-site Proton donor is the aspartate 354.

Belongs to the HAD-like hydrolase superfamily. EYA family. Interacts with SIX3; translocates EYA4 from the cytoplasm to the nucleus and promotes activation of their target genes. The cofactor is Mg(2+). In terms of tissue distribution, in the embryo, expressed mainly in the craniofacial mesenchyme, dermamyotome and limb.

It localises to the cytoplasm. The protein resides in the nucleus. The catalysed reaction is O-phospho-L-tyrosyl-[protein] + H2O = L-tyrosyl-[protein] + phosphate. Functionally, tyrosine phosphatase that specifically dephosphorylates 'Tyr-142' of histone H2AX (H2AXY142ph). 'Tyr-142' phosphorylation of histone H2AX plays a central role in DNA repair and acts as a mark that distinguishes between apoptotic and repair responses to genotoxic stress. Promotes efficient DNA repair by dephosphorylating H2AX, promoting the recruitment of DNA repair complexes containing MDC1. Its function as histone phosphatase probably explains its role in transcription regulation during organogenesis. May be involved in development of the eye. This is Protein phosphatase EYA4 (Eya4) from Mus musculus (Mouse).